Here is a 211-residue protein sequence, read N- to C-terminus: Dual specificity protein phosphatase 26 (211 aa).

The 148-residue stretch at asparagine 60–glutamine 207 folds into the Tyrosine-protein phosphatase domain. Residue cysteine 152 is the Phosphocysteine intermediate of the active site.

It belongs to the protein-tyrosine phosphatase family. Non-receptor class dual specificity subfamily. As to quaternary structure, interacts with HSF4.

The protein resides in the cytoplasm. It localises to the nucleus. Its subcellular location is the golgi apparatus. It carries out the reaction O-phospho-L-tyrosyl-[protein] + H2O = L-tyrosyl-[protein] + phosphate. The catalysed reaction is O-phospho-L-seryl-[protein] + H2O = L-seryl-[protein] + phosphate. It catalyses the reaction O-phospho-L-threonyl-[protein] + H2O = L-threonyl-[protein] + phosphate. Its function is as follows. Inactivates MAPK1 and MAPK3 which leads to dephosphorylation of heat shock factor protein 4 and a reduction in its DNA-binding activity. The protein is Dual specificity protein phosphatase 26 (Dusp26) of Rattus norvegicus (Rat).